Consider the following 117-residue polypeptide: Large ribosomal subunit protein eL8 (117 aa).

Belongs to the eukaryotic ribosomal protein eL8 family. As to quaternary structure, part of the 50S ribosomal subunit. Probably part of the RNase P complex.

It localises to the cytoplasm. Multifunctional RNA-binding protein that recognizes the K-turn motif in ribosomal RNA, the RNA component of RNase P, box H/ACA, box C/D and box C'/D' sRNAs. The sequence is that of Large ribosomal subunit protein eL8 from Methanococcus aeolicus (strain ATCC BAA-1280 / DSM 17508 / OCM 812 / Nankai-3).